A 334-amino-acid polypeptide reads, in one-letter code: Phospho-N-acetylmuramoyl-pentapeptide-transferase (334 aa).

10 helical membrane-spanning segments follow: residues 11 to 31, 55 to 75, 84 to 104, 124 to 144, 158 to 178, 184 to 204, 205 to 225, 233 to 253, 258 to 278, and 311 to 331; these read GAGLTALAGALALGPVVIPLM, PTMGGVIFIIPAILATLIFAP, LIIALVLTVGHGLVGFADDYI, VGLAAVLGYGAVEVLGLGTAV, PLYYLLVLIMVWGTASAVNFA, LLGGLSVITFSFYGLVVALAL, GQTDMAVLGTALVGGVLGFLH, IFMGDVGSFALGGALAALAVL, FLLVIVGAVYVIEVISVILQV, and LFWGAGLLFTLLGWLVLPGML.

The protein belongs to the glycosyltransferase 4 family. MraY subfamily. Mg(2+) is required as a cofactor.

Its subcellular location is the cell membrane. It catalyses the reaction UDP-N-acetyl-alpha-D-muramoyl-L-alanyl-gamma-D-glutamyl-meso-2,6-diaminopimeloyl-D-alanyl-D-alanine + di-trans,octa-cis-undecaprenyl phosphate = di-trans,octa-cis-undecaprenyl diphospho-N-acetyl-alpha-D-muramoyl-L-alanyl-D-glutamyl-meso-2,6-diaminopimeloyl-D-alanyl-D-alanine + UMP. It functions in the pathway cell wall biogenesis; peptidoglycan biosynthesis. Catalyzes the initial step of the lipid cycle reactions in the biosynthesis of the cell wall peptidoglycan: transfers peptidoglycan precursor phospho-MurNAc-pentapeptide from UDP-MurNAc-pentapeptide onto the lipid carrier undecaprenyl phosphate, yielding undecaprenyl-pyrophosphoryl-MurNAc-pentapeptide, known as lipid I. This Symbiobacterium thermophilum (strain DSM 24528 / JCM 14929 / IAM 14863 / T) protein is Phospho-N-acetylmuramoyl-pentapeptide-transferase.